The sequence spans 612 residues: Isocitrate dehydrogenase kinase/phosphatase (612 aa).

ATP is bound by residues 327–333 and K348; that span reads APGIKGL. The active site involves D383. Positions 593–612 are disordered; that stretch reads AGRASPEPDAPADARSVRVA.

This sequence belongs to the AceK family.

It is found in the cytoplasm. It catalyses the reaction L-seryl-[isocitrate dehydrogenase] + ATP = O-phospho-L-seryl-[isocitrate dehydrogenase] + ADP + H(+). Bifunctional enzyme which can phosphorylate or dephosphorylate isocitrate dehydrogenase (IDH) on a specific serine residue. This is a regulatory mechanism which enables bacteria to bypass the Krebs cycle via the glyoxylate shunt in response to the source of carbon. When bacteria are grown on glucose, IDH is fully active and unphosphorylated, but when grown on acetate or ethanol, the activity of IDH declines drastically concomitant with its phosphorylation. The sequence is that of Isocitrate dehydrogenase kinase/phosphatase from Paraburkholderia phytofirmans (strain DSM 17436 / LMG 22146 / PsJN) (Burkholderia phytofirmans).